The primary structure comprises 364 residues: Formimidoylglutamase (364 aa).

Positions 133, 189, 191, 193, 286, and 288 each coordinate Mn(2+).

It belongs to the arginase family. Requires Mn(2+) as cofactor.

The catalysed reaction is N-formimidoyl-L-glutamate + H2O = formamide + L-glutamate. The protein operates within amino-acid degradation; L-histidine degradation into L-glutamate; L-glutamate from N-formimidoyl-L-glutamate (hydrolase route): step 1/1. Its function is as follows. Catalyzes the conversion of N-formimidoyl-L-glutamate to L-glutamate and formamide. This Photobacterium profundum (strain SS9) protein is Formimidoylglutamase.